The primary structure comprises 107 residues: Nucleoid-associated protein Daro_0807 (107 aa).

This sequence belongs to the YbaB/EbfC family. In terms of assembly, homodimer.

The protein localises to the cytoplasm. It is found in the nucleoid. Functionally, binds to DNA and alters its conformation. May be involved in regulation of gene expression, nucleoid organization and DNA protection. In Dechloromonas aromatica (strain RCB), this protein is Nucleoid-associated protein Daro_0807.